A 307-amino-acid polypeptide reads, in one-letter code: Taste receptor type 2 member 41 (307 aa).

Residues 1-7 lie on the Extracellular side of the membrane; the sequence is MQAALTA. Residues 8–28 traverse the membrane as a helical segment; sequence FFMLLFSLLSLLGIAANGFIV. Residues 29–40 lie on the Cytoplasmic side of the membrane; the sequence is LVLGREWLRYGR. Residues 41–61 form a helical membrane-spanning segment; sequence LLPLDMILISLGASRFCLQLV. Over 62-88 the chain is Extracellular; the sequence is GTVHNFYYSAQKVEYSGGLGRQFFHLH. Residues 89-109 traverse the membrane as a helical segment; that stretch reads WHFLNSATFWFCSWLSVLFCV. Over 110–129 the chain is Cytoplasmic; that stretch reads KIANITHPTFLWLKWRFPAW. The helical transmembrane segment at 130–150 threads the bilayer; that stretch reads VPWLLLGSVLISFIITLLFFW. The Extracellular segment spans residues 151 to 183; it reads VNYPAYQEFLIRKFSVNMTYKWNTRIETYYFPS. N-linked (GlcNAc...) asparagine glycosylation is present at Asn-167. The chain crosses the membrane as a helical span at residues 184–204; that stretch reads LKLVIWSIPFSVFLVSIMLLI. Residues 205–234 lie on the Cytoplasmic side of the membrane; that stretch reads NSLRRHTQRMQHNGHSLQDPSTQAHTRALK. Residues 235 to 255 form a helical membrane-spanning segment; that stretch reads SLISFLILYALSFLSLIIDAT. Residues 256 to 264 lie on the Extracellular side of the membrane; it reads KFISMQNDF. The helical transmembrane segment at 265–285 threads the bilayer; sequence YWPWQIAVYLCISIHPFILIF. Over 286 to 307 the chain is Cytoplasmic; it reads SNLKLRSVFSQLLLLARGFWVA.

It belongs to the G-protein coupled receptor T2R family.

Its subcellular location is the membrane. Its function is as follows. Receptor that may play a role in the perception of bitterness and is gustducin-linked. May play a role in sensing the chemical composition of the gastrointestinal content. The activity of this receptor may stimulate alpha gustducin, mediate PLC-beta-2 activation and lead to the gating of TRPM5. The protein is Taste receptor type 2 member 41 (TAS2R41) of Pan paniscus (Pygmy chimpanzee).